A 100-amino-acid polypeptide reads, in one-letter code: Small ribosomal subunit protein uS14c (100 aa).

This sequence belongs to the universal ribosomal protein uS14 family. In terms of assembly, part of the 30S ribosomal subunit.

It localises to the plastid. The protein localises to the cyanelle. In terms of biological role, binds 16S rRNA, required for the assembly of 30S particles. The polypeptide is Small ribosomal subunit protein uS14c (Cyanophora paradoxa).